An 89-amino-acid polypeptide reads, in one-letter code: Small ribosomal subunit protein uS15 (89 aa).

Belongs to the universal ribosomal protein uS15 family. As to quaternary structure, part of the 30S ribosomal subunit. Forms a bridge to the 50S subunit in the 70S ribosome, contacting the 23S rRNA.

In terms of biological role, one of the primary rRNA binding proteins, it binds directly to 16S rRNA where it helps nucleate assembly of the platform of the 30S subunit by binding and bridging several RNA helices of the 16S rRNA. Functionally, forms an intersubunit bridge (bridge B4) with the 23S rRNA of the 50S subunit in the ribosome. This is Small ribosomal subunit protein uS15 from Acidothermus cellulolyticus (strain ATCC 43068 / DSM 8971 / 11B).